The sequence spans 377 residues: Succinyl-diaminopimelate desuccinylase (377 aa).

His66 is a Zn(2+) binding site. Asp68 is a catalytic residue. Asp99 is a binding site for Zn(2+). The active-site Proton acceptor is Glu133. Zn(2+) is bound by residues Glu134, Glu162, and His348.

It belongs to the peptidase M20A family. DapE subfamily. As to quaternary structure, homodimer. Zn(2+) serves as cofactor. Co(2+) is required as a cofactor.

The enzyme catalyses N-succinyl-(2S,6S)-2,6-diaminopimelate + H2O = (2S,6S)-2,6-diaminopimelate + succinate. The protein operates within amino-acid biosynthesis; L-lysine biosynthesis via DAP pathway; LL-2,6-diaminopimelate from (S)-tetrahydrodipicolinate (succinylase route): step 3/3. In terms of biological role, catalyzes the hydrolysis of N-succinyl-L,L-diaminopimelic acid (SDAP), forming succinate and LL-2,6-diaminopimelate (DAP), an intermediate involved in the bacterial biosynthesis of lysine and meso-diaminopimelic acid, an essential component of bacterial cell walls. This is Succinyl-diaminopimelate desuccinylase from Histophilus somni (strain 129Pt) (Haemophilus somnus).